A 196-amino-acid polypeptide reads, in one-letter code: Probable inactive nicotinamidase At3g16190 (196 aa).

It belongs to the isochorismatase family.

In terms of biological role, does not possess nicotinamidase activity in vitro. This is Probable inactive nicotinamidase At3g16190 from Arabidopsis thaliana (Mouse-ear cress).